Reading from the N-terminus, the 407-residue chain is Melanoma-associated antigen B6 (407 aa).

The interval 1 to 175 is disordered; it reads MPRGHKSKLR…YDVAAEGEDE (175 aa). 4 stretches are compositionally biased toward polar residues: residues 18–29, 57–71, 94–113, and 136–155; these read TNGQPQGLTGPQ, DASI…SPTG, and PSTS…SPTG. One can recognise an MAGE domain in the interval 195-394; it reads VKKKACTLAQ…GLYPHLYEDA (200 aa).

As to expression, expressed in testis. Not expressed in other normal tissues, but is expressed in tumors of different histological origins.

The chain is Melanoma-associated antigen B6 (MAGEB6) from Homo sapiens (Human).